Reading from the N-terminus, the 489-residue chain is MAARCTEAVLAALGVLSVCSASSSGSEASGEAEREEPWDGAVFRPPAALGAVGIARGPGSPPPGNREAVDLPVLLWWSPGLFPHFPGDSERIQCAHGACVASRDRRARADPRTRALLFYGTDFRAADAPLPRLAHQSWALLHEESPLNNFLLSHGPGIRLFNLTATFSRHSDYPLPLQWLPGAAYLRRPAPPPRERAEWRRRGYAPLLYLQSHCDVPSDRDRYVRELMRYIPVDSYGKCLQNREPPTVRLQDTATATTEDPELMAFLSRYKFHLALENAICNDYMTEKLWRPMHLGAVPVYRGSPSVRDWMPNNHSVILIDDFESPQKLAEFIDFLDKNDDEYMKYLAYKQPGGITNQFLLDNLEHREWGVNDPMLPNYLNGFECFVCDHELARLNAEKAHASSHGDIPVPEPRIAQSSHMNCPVPTPGFGKVEEIPENDSWKEMWLQDYWQGLYQGEALTAMIHNNETQQRKFWDYVHEIFMKRNKNL.

The Cytoplasmic portion of the chain corresponds to 1 to 7 (MAARCTE). Residues 8 to 24 (AVLAALGVLSVCSASSS) form a helical; Signal-anchor for type II membrane protein membrane-spanning segment. The Lumenal segment spans residues 25–489 (GSEASGEAER…EIFMKRNKNL (465 aa)). Asn162 carries an N-linked (GlcNAc...) asparagine glycan. Cys385 and Cys388 are joined by a disulfide.

It belongs to the glycosyltransferase 10 family. In terms of tissue distribution, widely expressed. Expressed at slightly higher level in heart, kidney and lung.

The protein localises to the endoplasmic reticulum membrane. It carries out the reaction L-threonyl-[protein] + GDP-beta-L-fucose = 3-O-(alpha-L-fucosyl)-L-threonyl-[protein] + GDP + H(+). It catalyses the reaction L-seryl-[protein] + GDP-beta-L-fucose = 3-O-(alpha-L-fucosyl)-L-seryl-[protein] + GDP + H(+). It participates in protein modification; protein glycosylation. In terms of biological role, protein O-fucosyltransferase that specifically catalyzes O-fucosylation of serine or threonine residues in EMI domains of target proteins, such as MMRN1, MMRN2 and EMID1. Attaches fucose through an O-glycosidic linkage. O-fucosylation of EMI domain-containing proteins may be required for facilitating protein folding and secretion. Also shows minor alpha-(1,3)-fucosyltransferase activity toward activity toward biantennary N-glycan acceptors. However, this was tested with a library of synthetic substrates and this activity is unsure in vivo. The sequence is that of GDP-fucose protein O-fucosyltransferase 4 (Fut11) from Mus musculus (Mouse).